The primary structure comprises 80 residues: NAD(P)H-quinone oxidoreductase subunit O (80 aa).

It belongs to the complex I NdhO subunit family. In terms of assembly, NDH-1 can be composed of about 15 different subunits; different subcomplexes with different compositions have been identified which probably have different functions.

The protein resides in the cellular thylakoid membrane. It carries out the reaction a plastoquinone + NADH + (n+1) H(+)(in) = a plastoquinol + NAD(+) + n H(+)(out). It catalyses the reaction a plastoquinone + NADPH + (n+1) H(+)(in) = a plastoquinol + NADP(+) + n H(+)(out). In terms of biological role, NDH-1 shuttles electrons from an unknown electron donor, via FMN and iron-sulfur (Fe-S) centers, to quinones in the respiratory and/or the photosynthetic chain. The immediate electron acceptor for the enzyme in this species is believed to be plastoquinone. Couples the redox reaction to proton translocation, and thus conserves the redox energy in a proton gradient. Cyanobacterial NDH-1 also plays a role in inorganic carbon-concentration. The polypeptide is NAD(P)H-quinone oxidoreductase subunit O (Prochlorococcus marinus (strain MIT 9515)).